Reading from the N-terminus, the 252-residue chain is Triosephosphate isomerase (252 aa).

Residue 10–12 participates in substrate binding; sequence NWK. His-96 (electrophile) is an active-site residue. Residue Glu-168 is the Proton acceptor of the active site. Substrate contacts are provided by residues Gly-174, Ser-214, and 235–236; that span reads GG.

It belongs to the triosephosphate isomerase family. In terms of assembly, homodimer.

Its subcellular location is the cytoplasm. The catalysed reaction is D-glyceraldehyde 3-phosphate = dihydroxyacetone phosphate. The protein operates within carbohydrate biosynthesis; gluconeogenesis. It participates in carbohydrate degradation; glycolysis; D-glyceraldehyde 3-phosphate from glycerone phosphate: step 1/1. Involved in the gluconeogenesis. Catalyzes stereospecifically the conversion of dihydroxyacetone phosphate (DHAP) to D-glyceraldehyde-3-phosphate (G3P). This Lactococcus lactis subsp. cremoris (strain MG1363) protein is Triosephosphate isomerase.